A 57-amino-acid chain; its full sequence is MPAIQPPLYLTFLLLILLYLIITLYVWTILTINHKTAVRYAALYQRSCSRWGFDQSL.

Residues 1-8 lie on the Virion surface side of the membrane; sequence MPAIQPPL. A helical transmembrane segment spans residues 9–29; the sequence is YLTFLLLILLYLIITLYVWTI. The Intravirion portion of the chain corresponds to 30–57; sequence LTINHKTAVRYAALYQRSCSRWGFDQSL.

It belongs to the rubulavirus small hydrophobic protein family. As to quaternary structure, interacts with host TNFRSF1A, RIPK1 and IRAK1; these interactions interfere with host NF-kappa-B activation at the level of receptor complexes. Interacts with host protein UBQLN4.

The protein localises to the virion membrane. The protein resides in the host cell membrane. In terms of biological role, plays a role in the inhibition of the host NF-kappa-B pathway. This inhibition occurs at the receptor level, by preventing the signaling of TNFR1 as well as IL-1R and TLR3. The chain is Small hydrophobic protein (SH) from Mumps virus (strain Enders) (MuV).